The following is a 153-amino-acid chain: Ribonuclease P protein component (153 aa).

It belongs to the RnpA family. In terms of assembly, consists of a catalytic RNA component (M1 or rnpB) and a protein subunit.

The enzyme catalyses Endonucleolytic cleavage of RNA, removing 5'-extranucleotides from tRNA precursor.. RNaseP catalyzes the removal of the 5'-leader sequence from pre-tRNA to produce the mature 5'-terminus. It can also cleave other RNA substrates such as 4.5S RNA. The protein component plays an auxiliary but essential role in vivo by binding to the 5'-leader sequence and broadening the substrate specificity of the ribozyme. This Helicobacter acinonychis (strain Sheeba) protein is Ribonuclease P protein component.